A 497-amino-acid chain; its full sequence is MFAKATRSFLREVDAEGDLIAVSNLNDSDKSQLLSLVTKKKRFWCWQRPKYQFLSVTLGDVLTEAQCLSPVVVESDFVKYEGKFENHVSGTIETALGKVKLNFGDKGLRESQSSFGTLRKQEVDLQQLIRDSVERTINLKNPVLQQMLESKNEVLCILTQKIVTTQKCVISEHIQTEEKCGGMVGIKTKTVQVSVTKDENIIKDASVALEIPAPTTIAYSVIELYVKLDGQFEFCLLRGKHGGFEHQRRSDIVFPDAGALQDFPFWDVPDAGQGLPTPDGPLSVLKQGTRLLEKNFFPFVELPEQHRTALNTVLQAVLSDEELLAVLEQVCDDLVHSLSPPLAMLGELKPPHRQDLTAFLRLVGYRVQGGCPCLEDGVGSQKLFSTAYFLVSALAEMPDNAAALLGTCCKLQIIPALCHLLHAMSHDGVCDLEDPALAPLKDTERFGVAQRLFASADINLERVQSSVKAVTPLKDPSVLPLILYISLKGLCALGREH.

The interval 1 to 56 (MFAKATRSFLREVDAEGDLIAVSNLNDSDKSQLLSLVTKKKRFWCWQRPKYQFLSV) is membrane targeting domain. The residue at position 45 (Cys-45) is an S-(2-succinyl)cysteine. A Glycyl lysine isopeptide (Lys-Gly) (interchain with G-Cter in ubiquitin) cross-link involves residue Lys-120. Cys-156, Cys-168, and Cys-180 each carry S-(2-succinyl)cysteine. Lys-189 participates in a covalent cross-link: Glycyl lysine isopeptide (Lys-Gly) (interchain with G-Cter in ubiquitin). S-(2-succinyl)cysteine is present on residues Cys-235, Cys-371, Cys-409, Cys-418, and Cys-491.

It belongs to the gasdermin family. Homooligomer; homooligomeric ring-shaped pore complex containing 27-28 subunits when inserted in the membrane. Cleavage at Asp-270 by CASP3 (mature and uncleaved precursor forms) or granzyme B (GZMB) relieves autoinhibition and is sufficient to initiate pyroptosis. Post-translationally, succination by the Krebs cycle intermediate fumarate, which leads to S-(2-succinyl)cysteine residues, inhibits processing by caspases, and ability to initiate pyroptosis. Succination modification is catalyzed by a non-enzymatic reaction caused by an accumulation of fumarate. In terms of processing, ubiquitinated on Lys-120 and Lys-189 via 'Lys-48'-linked polyubiquitin chains, leading to proteasomal degradation. Deubiquitinated by USP48, leading to increased stability. Palmitoylated.

Its subcellular location is the cell membrane. The protein resides in the cytoplasm. The protein localises to the cytosol. With respect to regulation, the full-length protein before cleavage is inactive: intramolecular interactions between N- and C-terminal domains mediate autoinhibition in the absence of activation signal. The intrinsic pyroptosis-inducing activity is carried by the released N-terminal moiety (Gasdermin-E, N-terminal) following cleavage by CASP3 or granzyme B (GZMB). Activated by NLRP1 in the absence of GSDMD expression: NLRP1 cleaves and activates CASP8, promoting downstream activation of CASP3 and subsequent activation of GSDME. In terms of biological role, precursor of a pore-forming protein that converts non-inflammatory apoptosis to pyroptosis. This form constitutes the precursor of the pore-forming protein: upon cleavage, the released N-terminal moiety (Gasdermin-E, N-terminal) binds to membranes and forms pores, triggering pyroptosis. Its function is as follows. Pore-forming protein produced by cleavage by CASP3 or granzyme B (GZMB), which converts non-inflammatory apoptosis to pyroptosis or promotes granzyme-mediated pyroptosis, respectively. After cleavage, moves to the plasma membrane, homooligomerizes within the membrane and forms pores of 10-15 nanometers (nm) of inner diameter, allowing the release of mature interleukins (IL1B and IL16) and triggering pyroptosis. Binds to inner leaflet lipids, bisphosphorylated phosphatidylinositols, such as phosphatidylinositol (4,5)-bisphosphate. Cleavage by CASP3 switches CASP3-mediated apoptosis induced by TNF or danger signals, such as chemotherapy drugs, to pyroptosis. Mediates secondary necrosis downstream of the mitochondrial apoptotic pathway and CASP3 activation as well as in response to viral agents. Exhibits bactericidal activity. Cleavage by GZMB promotes tumor suppressor activity by triggering robust anti-tumor immunity. Suppresses tumors by mediating granzyme-mediated pyroptosis in target cells of natural killer (NK) cells: cleavage by granzyme B (GZMB), delivered to target cells from NK-cells, triggers pyroptosis of tumor cells and tumor suppression. May play a role in the p53/TP53-regulated cellular response to DNA damage. The polypeptide is Gasdermin-E (Equus caballus (Horse)).